Consider the following 198-residue polypeptide: B9 domain-containing protein 1 (198 aa).

In terms of domain architecture, C2 B9-type spans 8–126 (FLLNVSGQIE…TIPMFVPESS (119 aa)).

It belongs to the B9D family. Part of the tectonic-like complex (also named B9 complex).

Its subcellular location is the cytoplasm. It is found in the cytoskeleton. The protein resides in the cilium basal body. In terms of biological role, component of the tectonic-like complex, a complex localized at the transition zone of primary cilia and acting as a barrier that prevents diffusion of transmembrane proteins between the cilia and plasma membranes. Required for ciliogenesis and sonic hedgehog/SHH signaling. This is B9 domain-containing protein 1 (b9d1) from Xenopus laevis (African clawed frog).